The primary structure comprises 286 residues: 4-diphosphocytidyl-2-C-methyl-D-erythritol kinase (286 aa).

Lys11 is a catalytic residue. Residue 94–104 (PMGGGIGGGSS) participates in ATP binding. Asp136 is an active-site residue.

It belongs to the GHMP kinase family. IspE subfamily.

The catalysed reaction is 4-CDP-2-C-methyl-D-erythritol + ATP = 4-CDP-2-C-methyl-D-erythritol 2-phosphate + ADP + H(+). The protein operates within isoprenoid biosynthesis; isopentenyl diphosphate biosynthesis via DXP pathway; isopentenyl diphosphate from 1-deoxy-D-xylulose 5-phosphate: step 3/6. In terms of biological role, catalyzes the phosphorylation of the position 2 hydroxy group of 4-diphosphocytidyl-2C-methyl-D-erythritol. The polypeptide is 4-diphosphocytidyl-2-C-methyl-D-erythritol kinase (Pseudomonas entomophila (strain L48)).